Here is an 87-residue protein sequence, read N- to C-terminus: Putative outer membrane protein ArbH (87 aa).

A signal peptide spans 1 to 23; the sequence is MKIKNSYLVIASLLYPISFISTA.

This sequence belongs to the porin LamB (TC 1.B.3) family.

It is found in the cell outer membrane. Functionally, may be a sugar porin with a broad carbohydrate specificity. This Dickeya chrysanthemi (Pectobacterium chrysanthemi) protein is Putative outer membrane protein ArbH (arbH).